The sequence spans 396 residues: Elongation factor Tu (396 aa).

A tr-type G domain is found at 10-206; it reads KPHVNVGTIG…TMDSYIPEPV (197 aa). The segment at 19–26 is G1; it reads GHVDHGKT. 19–26 serves as a coordination point for GTP; the sequence is GHVDHGKT. Residue Thr26 coordinates Mg(2+). Residues 60–64 form a G2 region; that stretch reads GITIS. The interval 81–84 is G3; that stretch reads DCPG. Residues 81 to 85 and 136 to 139 each bind GTP; these read DCPGH and NKAD. Residues 136–139 are G4; the sequence is NKAD. A G5 region spans residues 174–176; the sequence is SAL.

This sequence belongs to the TRAFAC class translation factor GTPase superfamily. Classic translation factor GTPase family. EF-Tu/EF-1A subfamily. As to quaternary structure, monomer.

It localises to the cytoplasm. It catalyses the reaction GTP + H2O = GDP + phosphate + H(+). GTP hydrolase that promotes the GTP-dependent binding of aminoacyl-tRNA to the A-site of ribosomes during protein biosynthesis. This is Elongation factor Tu from Legionella pneumophila (strain Lens).